We begin with the raw amino-acid sequence, 295 residues long: MSGALDVLQMKEEDVLKFLAAGTHLGGTNLDFQMEHYIYKRKSDGIYIINLKRTWEKLLLAARAIVAIENPADVSVISSRNTGQRAVLKFAAATGATPIAGRFTPGTFTNQIQAAFWEPRLLVVTDPRADHQPLTEASYVNLPTIALCNTDSPLRYVDIAIPCNNKGAHSVGLMWWMLAREVLRMRGTISREHPWEVMPDLYFYRDPEEIEKEEQAAAEKAVTKEEFQGEWTAPSPEFTATQPEVADWSEGVQVPSVPIQQFPTEDWSAQPATEDWSAAPTAQATEWVGATTDWS.

Position 2 is an N-acetylserine (S2). An interaction with PPP1R16B region spans residues 54 to 113 (TWEKLLLAARAIVAIENPADVSVISSRNTGQRAVLKFAAATGATPIAGRFTPGTFTNQIQ). 2 laminin-binding regions span residues 161–180 (IPCN…MLAR) and 205–229 (RDPE…EFQG). Residues 218 to 227 (AEKAVTKEEF) show a composition bias toward basic and acidic residues. Residues 218–242 (AEKAVTKEEFQGEWTAPSPEFTATQ) are disordered. [DE]-W-[ST] repeat units follow at residues 230–232 (EWT), 247–249 (DWS), 266–268 (DWS), 275–277 (DWS), and 293–295 (DWS). Residues 242–295 (QPEVADWSEGVQVPSVPIQQFPTEDWSAQPATEDWSAAPTAQATEWVGATTDWS) form a laminin-binding region. The interval 266–295 (DWSAQPATEDWSAAPTAQATEWVGATTDWS) is disordered.

It belongs to the universal ribosomal protein uS2 family. Monomer (37LRP) and homodimer (67LR). Component of the small ribosomal subunit. Mature ribosomes consist of a small (40S) and a large (60S) subunit. The 40S subunit contains about 33 different proteins and 1 molecule of RNA (18S). The 60S subunit contains about 49 different proteins and 3 molecules of RNA (28S, 5.8S and 5S). Interacts with RPS21. Interacts with several laminins including at least LAMB1. Interacts with MDK. The mature dimeric form interacts with PPP1R16B (via its fourth ankyrin repeat). Interacts with PPP1CA only in the presence of PPP1R16B. In terms of processing, acylated. Acylation may be a prerequisite for conversion of the monomeric 37 kDa laminin receptor precursor (37LRP) to the mature dimeric 67 kDa laminin receptor (67LR), and may provide a mechanism for membrane association. Post-translationally, cleaved by stromelysin-3 (ST3) at the cell surface. Cleavage by stromelysin-3 may be a mechanism to alter cell-extracellular matrix interactions.

The protein resides in the cell membrane. It localises to the cytoplasm. It is found in the nucleus. Required for the assembly and/or stability of the 40S ribosomal subunit. Required for the processing of the 20S rRNA-precursor to mature 18S rRNA in a late step of the maturation of 40S ribosomal subunits. Also functions as a cell surface receptor for laminin. Plays a role in cell adhesion to the basement membrane and in the consequent activation of signaling transduction pathways. May play a role in cell fate determination and tissue morphogenesis. Also acts as a receptor for several other ligands, including the pathogenic prion protein, viruses, and bacteria. Acts as a PPP1R16B-dependent substrate of PPP1CA. In Homo sapiens (Human), this protein is Small ribosomal subunit protein uS2B.